The following is a 248-amino-acid chain: Trihelix transcription factor ENAP2 (248 aa).

Positions 1–13 are enriched in polar residues; the sequence is METTTPQSKSSVS. The interval 1-20 is disordered; the sequence is METTTPQSKSSVSHRPPLGR. The segment at residues 24 to 113 is a DNA-binding region (MADF); the sequence is WSEEATATLV…RLDVLIGPVV (90 aa). The short motif at 69-76 is the Nuclear localization signal element; the sequence is RKKTDLQC. The tract at residues 123-150 is disordered; the sequence is SAPFKNHLNPTGSNSTGSSLEDDDEDDD. Positions 130–141 are enriched in polar residues; it reads LNPTGSNSTGSS. Residues 190–210 adopt a coiled-coil conformation; it reads YERIEGKKQQMMIELEKQRME.

In terms of assembly, interacts with the Agrobacterium tumefaciens virulence protein F (VirF) in the nucleus. Binds to EIN2 C-terminal region in the presence of ethylene.

The protein localises to the nucleus. Its subcellular location is the nucleoplasm. Functionally, probable transcription regulator. Promotes histone acetylation during ethylene signaling in an EIN2-dependent manner, thus regulating positively ethylene-responsive genes. In Arabidopsis thaliana (Mouse-ear cress), this protein is Trihelix transcription factor ENAP2.